The primary structure comprises 345 residues: Ribosomal RNA small subunit methyltransferase C (345 aa).

It belongs to the methyltransferase superfamily. RsmC family. Monomer.

Its subcellular location is the cytoplasm. It carries out the reaction guanosine(1207) in 16S rRNA + S-adenosyl-L-methionine = N(2)-methylguanosine(1207) in 16S rRNA + S-adenosyl-L-homocysteine + H(+). In terms of biological role, specifically methylates the guanine in position 1207 of 16S rRNA in the 30S particle. The polypeptide is Ribosomal RNA small subunit methyltransferase C (Shewanella denitrificans (strain OS217 / ATCC BAA-1090 / DSM 15013)).